Reading from the N-terminus, the 237-residue chain is Class B acid phosphatase (237 aa).

A signal peptide spans M1 to A23. D69 serves as the catalytic Nucleophile. Residues D69 and D71 each coordinate Mg(2+). The Proton donor role is filled by D71. Substrate-binding positions include T137–G138 and K177. D192 contributes to the Mg(2+) binding site.

It belongs to the class B bacterial acid phosphatase family. In terms of assembly, homotetramer. Mg(2+) serves as cofactor.

The protein localises to the periplasm. The catalysed reaction is a phosphate monoester + H2O = an alcohol + phosphate. In terms of biological role, dephosphorylates several organic phosphate monoesters. Also has a phosphotransferase activity catalyzing the transfer of low-energy phosphate groups from organic phosphate monoesters to free hydroxyl groups of various organic compounds. The polypeptide is Class B acid phosphatase (Xenorhabdus bovienii (strain SS-2004) (Xenorhabdus nematophila subsp. bovienii)).